A 350-amino-acid polypeptide reads, in one-letter code: Heat-inducible transcription repressor HrcA (350 aa).

Belongs to the HrcA family.

Functionally, negative regulator of class I heat shock genes (grpE-dnaK-dnaJ and groELS operons). Prevents heat-shock induction of these operons. The sequence is that of Heat-inducible transcription repressor HrcA from Ligilactobacillus salivarius (strain UCC118) (Lactobacillus salivarius).